The chain runs to 221 residues: Ribosomal RNA large subunit methyltransferase E (221 aa).

5 residues coordinate S-adenosyl-L-methionine: G60, W62, D89, D105, and D134. K174 serves as the catalytic Proton acceptor. The disordered stretch occupies residues 199 to 221 (KPKASRDKSSETFLLGRQLKHPG).

Belongs to the class I-like SAM-binding methyltransferase superfamily. RNA methyltransferase RlmE family.

Its subcellular location is the cytoplasm. The catalysed reaction is uridine(2552) in 23S rRNA + S-adenosyl-L-methionine = 2'-O-methyluridine(2552) in 23S rRNA + S-adenosyl-L-homocysteine + H(+). Its function is as follows. Specifically methylates the uridine in position 2552 of 23S rRNA at the 2'-O position of the ribose in the fully assembled 50S ribosomal subunit. The protein is Ribosomal RNA large subunit methyltransferase E of Ralstonia pickettii (strain 12J).